Here is a 236-residue protein sequence, read N- to C-terminus: Thrombin-like enzyme kangshuanmei (236 aa).

The Peptidase S1 domain maps to 1 to 227 (VIGGDECNIN…HLDWIQSIIA (227 aa)). Disulfide bonds link Cys7-Cys141, Cys28-Cys44, Cys78-Cys234, Cys120-Cys188, Cys152-Cys167, and Cys178-Cys203. The active-site Charge relay system is the His43. N-linked (GlcNAc...) asparagine glycosylation occurs at Asn81. The active-site Charge relay system is Asp88. N-linked (GlcNAc...) asparagine glycans are attached at residues Asn99 and Asn148. Ser182 (charge relay system) is an active-site residue. N-linked (GlcNAc...) asparagine glycosylation occurs at Asn229.

It belongs to the peptidase S1 family. Snake venom subfamily. In terms of assembly, monomer. In terms of processing, N-glycosylated by units composed of Fuc, Man, GlcNAc, Gal and NeuAC residues. In terms of tissue distribution, expressed by the venom gland.

The protein localises to the secreted. With respect to regulation, inhibited by 4-(2-aminoethyl)-benzensulfonyl fluoride. Not inhibited by antithrombin-III. Functionally, thrombin-like snake venom serine protease. Cleaves bonds after Arg and Lys, converts fibrinogen (FGA and FGB) to fibrin and releases both fibrinopeptides A and B, and fibrinogen peptide Bbeta1-42. Has a blood clotting activity. The chain is Thrombin-like enzyme kangshuanmei from Gloydius brevicauda (Korean slamosa snake).